A 440-amino-acid polypeptide reads, in one-letter code: Transposon Ty1-MR1 Gag polyprotein (440 aa).

Polar residues-rich tracts occupy residues 1–31 (MESQQLSQHSPISHGSACASVTSKEVQTTQD), 46–60 (VSTQANSQQPTTPLS), and 137–168 (VGTHLNTPSPESGNSFPDSSSAKSNMTSTNQH). 3 disordered regions span residues 1–88 (MESQ…YPQQ), 137–174 (VGTHLNTPSPESGNSFPDSSSAKSNMTSTNQHVRPPPI), and 350–424 (QQES…TTEP). The interval 299–401 (NNGIPINNKV…NSQSRTARAH (103 aa)) is RNA-binding. A compositionally biased stretch (basic and acidic residues) spans 363 to 372 (SPSDEKKDSR). Over residues 373–411 (TYTNTTKPKSITRNSQKPNNSQSRTARAHNVSTFNNSPG) the composition is skewed to polar residues.

Homotrimer.

It is found in the cytoplasm. Capsid protein (CA) is the structural component of the virus-like particle (VLP), forming the shell that encapsulates the retrotransposons dimeric RNA genome. The particles are assembled from trimer-clustered units and there are holes in the capsid shells that allow for the diffusion of macromolecules. CA also has nucleocapsid-like chaperone activity, promoting primer tRNA(i)-Met annealing to the multipartite primer-binding site (PBS), dimerization of Ty1 RNA and initiation of reverse transcription. This Saccharomyces cerevisiae (strain ATCC 204508 / S288c) (Baker's yeast) protein is Transposon Ty1-MR1 Gag polyprotein (TY1A-MR1).